Reading from the N-terminus, the 377-residue chain is Glutamate 5-kinase (377 aa).

Lysine 22 serves as a coordination point for ATP. Residues serine 62, aspartate 149, and asparagine 161 each contribute to the substrate site. ATP contacts are provided by residues 181-182 (TD) and 223-229 (TGGMVTK). Residues 285–359 (QGTLVADSGA…GRNTAQLKRF (75 aa)) enclose the PUA domain.

It belongs to the glutamate 5-kinase family.

The protein localises to the cytoplasm. It catalyses the reaction L-glutamate + ATP = L-glutamyl 5-phosphate + ADP. It functions in the pathway amino-acid biosynthesis; L-proline biosynthesis; L-glutamate 5-semialdehyde from L-glutamate: step 1/2. Catalyzes the transfer of a phosphate group to glutamate to form L-glutamate 5-phosphate. The protein is Glutamate 5-kinase of Bifidobacterium adolescentis (strain ATCC 15703 / DSM 20083 / NCTC 11814 / E194a).